The primary structure comprises 295 residues: Probable protein phosphatase 2C 5 (295 aa).

A PPM-type phosphatase domain is found at 23–294 (QYAATHMQGW…DNMTCILVLF (272 aa)). Residues D57 and G58 each coordinate Mn(2+). Positions 151 to 170 (NRDGKPFDMSKDHKPDDDQE) are disordered. D237 and D285 together coordinate Mn(2+).

Belongs to the PP2C family. Mg(2+) serves as cofactor. Mn(2+) is required as a cofactor.

The protein localises to the membrane. It catalyses the reaction O-phospho-L-seryl-[protein] + H2O = L-seryl-[protein] + phosphate. The enzyme catalyses O-phospho-L-threonyl-[protein] + H2O = L-threonyl-[protein] + phosphate. In terms of biological role, enzyme with a broad specificity. The polypeptide is Probable protein phosphatase 2C 5 (Paramecium tetraurelia).